Here is a 169-residue protein sequence, read N- to C-terminus: Transcription regulatory protein SNF11 (169 aa).

The disordered stretch occupies residues 1-24; the sequence is MSSEIAYSNTNTNTENENRNTGAG. Residue Ser-2 is modified to N-acetylserine. A compositionally biased stretch (low complexity) spans 9 to 21; it reads NTNTNTENENRNT. A run of 8 repeats spans residues 28–31, 32–35, 36–39, 40–43, 44–47, 48–51, 76–80, and 160–165. Positions 28 to 51 are 6 X 4 AA tandem repeats of N-[AT]-[NT]-A; the sequence is NTNANANANATANATANATANATA. Positions 76–165 are 2 X 5 AA repeats of L-L-A-R-V; that stretch reads LLARVIQMNN…SKLYLLLARV (90 aa).

As to quaternary structure, component of the SWI/SNF global transcription activator complex. The 1.14 MDa SWI/SNF complex is composed of 11 different subunits: one copy each of SWI1, SNF2/SWI2, SNF5, SNF12/SWP73, ARP7/SWP61, ARP9/SWP59; two copies each of SWI3, SNF6, SNF11, SWP82; and three copies of TAF14/SWP29.

The protein localises to the nucleus. Involved in transcriptional activation. Component of the SWI/SNF complex, an ATP-dependent chromatin remodeling complex, which is required for the positive and negative regulation of gene expression of a large number of genes. It changes chromatin structure by altering DNA-histone contacts within a nucleosome, leading eventually to a change in nucleosome position, thus facilitating or repressing binding of gene-specific transcription factors. The protein is Transcription regulatory protein SNF11 (SNF11) of Saccharomyces cerevisiae (strain ATCC 204508 / S288c) (Baker's yeast).